The following is a 140-amino-acid chain: General stress protein 26 (140 aa).

The protein is General stress protein 26 (ydaG) of Bacillus subtilis (strain 168).